We begin with the raw amino-acid sequence, 366 residues long: Ribosomal RNA large subunit methyltransferase M (366 aa).

Residues Ser188, 221 to 224 (CPGG), Asp240, Asp260, and Asp277 contribute to the S-adenosyl-L-methionine site. The active-site Proton acceptor is Lys306.

Belongs to the class I-like SAM-binding methyltransferase superfamily. RNA methyltransferase RlmE family. RlmM subfamily. In terms of assembly, monomer.

Its subcellular location is the cytoplasm. The catalysed reaction is cytidine(2498) in 23S rRNA + S-adenosyl-L-methionine = 2'-O-methylcytidine(2498) in 23S rRNA + S-adenosyl-L-homocysteine + H(+). Catalyzes the 2'-O-methylation at nucleotide C2498 in 23S rRNA. The polypeptide is Ribosomal RNA large subunit methyltransferase M (Cronobacter sakazakii (strain ATCC BAA-894) (Enterobacter sakazakii)).